The chain runs to 385 residues: DNA replication and repair protein RecF (385 aa).

ATP is bound at residue 30 to 37; the sequence is GPNGFGKT.

This sequence belongs to the RecF family.

It localises to the cytoplasm. The RecF protein is involved in DNA metabolism; it is required for DNA replication and normal SOS inducibility. RecF binds preferentially to single-stranded, linear DNA. It also seems to bind ATP. The polypeptide is DNA replication and repair protein RecF (Mycobacterium marinum (strain ATCC BAA-535 / M)).